Reading from the N-terminus, the 338-residue chain is GTPase Obg (338 aa).

The Obg domain occupies 1-159 (MSFIDEVKIH…RWLRLELKLM (159 aa)). In terms of domain architecture, OBG-type G spans 160 to 331 (ADVGLLGMPS…LLDEIARNLW (172 aa)). Residues 166 to 173 (GMPSVGKS), 191 to 195 (FTTLK), 213 to 216 (DIPG), 283 to 286 (NKID), and 312 to 314 (SAA) each bind GTP. Mg(2+) is bound by residues S173 and T193.

Belongs to the TRAFAC class OBG-HflX-like GTPase superfamily. OBG GTPase family. In terms of assembly, monomer. Mg(2+) is required as a cofactor.

Its subcellular location is the cytoplasm. Functionally, an essential GTPase which binds GTP, GDP and possibly (p)ppGpp with moderate affinity, with high nucleotide exchange rates and a fairly low GTP hydrolysis rate. Plays a role in control of the cell cycle, stress response, ribosome biogenesis and in those bacteria that undergo differentiation, in morphogenesis control. The chain is GTPase Obg from Geotalea uraniireducens (strain Rf4) (Geobacter uraniireducens).